The primary structure comprises 296 residues: DNA repair protein complementing XP-A cells homolog (296 aa).

Over residues 1–10 the composition is skewed to polar residues; sequence MSAEVSTNES. The disordered stretch occupies residues 1-39; sequence MSAEVSTNESAPPAEKKSKLTNAQKARIERNQAKAQKLR. Over residues 26–39 the composition is skewed to basic and acidic residues; the sequence is ARIERNQAKAQKLR. Residues 26 to 47 carry the Nuclear localization signal motif; it reads ARIERNQAKAQKLREAKLVSHP. C126, C129, C147, and C150 together coordinate Zn(2+). Residues 126 to 150 fold into a zinc finger; sequence CLECGDMFADSYLFNNFGHSVCDKC.

It belongs to the XPA family. As to expression, strongly expressed in the central nervous system and muscles.

It localises to the nucleus. Functionally, involved in DNA excision repair. Initiates repair by binding to damaged sites with various affinities, depending on the photoproduct and the transcriptional state of the region. The protein is DNA repair protein complementing XP-A cells homolog (Xpac) of Drosophila melanogaster (Fruit fly).